We begin with the raw amino-acid sequence, 432 residues long: GTPase Obg (432 aa).

Residues 1-159 (MKFIDTAKFT…YEVKAELKVL (159 aa)) form the Obg domain. Positions 160–332 (ADVGFVGLPN…LLLKIAKELE (173 aa)) constitute an OBG-type G domain. Residues 166 to 173 (GLPNAGKS), 191 to 195 (FTTLN), 213 to 216 (DLPG), 284 to 287 (NKMD), and 313 to 315 (SGL) each bind GTP. S173 and T193 together coordinate Mg(2+). An OCT domain is found at 354–432 (RLEEDEEDIQ…VFEYELEWMD (79 aa)).

This sequence belongs to the TRAFAC class OBG-HflX-like GTPase superfamily. OBG GTPase family. As to quaternary structure, monomer. Mg(2+) is required as a cofactor.

It localises to the cytoplasm. In terms of biological role, an essential GTPase which binds GTP, GDP and possibly (p)ppGpp with moderate affinity, with high nucleotide exchange rates and a fairly low GTP hydrolysis rate. Plays a role in control of the cell cycle, stress response, ribosome biogenesis and in those bacteria that undergo differentiation, in morphogenesis control. This is GTPase Obg from Mesoplasma florum (strain ATCC 33453 / NBRC 100688 / NCTC 11704 / L1) (Acholeplasma florum).